We begin with the raw amino-acid sequence, 102 residues long: Small ribosomal subunit protein uS10 (102 aa).

Belongs to the universal ribosomal protein uS10 family. As to quaternary structure, part of the 30S ribosomal subunit.

Its function is as follows. Involved in the binding of tRNA to the ribosomes. This Caldanaerobacter subterraneus subsp. tengcongensis (strain DSM 15242 / JCM 11007 / NBRC 100824 / MB4) (Thermoanaerobacter tengcongensis) protein is Small ribosomal subunit protein uS10.